Consider the following 368-residue polypeptide: Xaa-Pro dipeptidase (368 aa).

Aspartate 223, aspartate 234, histidine 298, glutamate 327, and glutamate 341 together coordinate Mn(2+).

This sequence belongs to the peptidase M24B family. Mn(2+) is required as a cofactor.

It localises to the cytoplasm. It catalyses the reaction Xaa-L-Pro dipeptide + H2O = an L-alpha-amino acid + L-proline. This Lactobacillus delbrueckii subsp. lactis protein is Xaa-Pro dipeptidase (pepQ).